A 557-amino-acid chain; its full sequence is Alpha-glucosidase (557 aa).

Catalysis depends on D201, which acts as the Nucleophile. E256 functions as the Proton donor in the catalytic mechanism.

The protein belongs to the glycosyl hydrolase 13 family.

The catalysed reaction is Hydrolysis of terminal, non-reducing (1-&gt;4)-linked alpha-D-glucose residues with release of alpha-D-glucose.. The sequence is that of Alpha-glucosidase (agl) from Pediococcus pentosaceus.